The chain runs to 1381 residues: DNA-directed RNA polymerase subunit beta'' (1381 aa).

Zn(2+) is bound by residues Cys-224, Cys-295, Cys-302, and Cys-305.

The protein belongs to the RNA polymerase beta' chain family. RpoC2 subfamily. In plastids the minimal PEP RNA polymerase catalytic core is composed of four subunits: alpha, beta, beta', and beta''. When a (nuclear-encoded) sigma factor is associated with the core the holoenzyme is formed, which can initiate transcription. Requires Zn(2+) as cofactor.

Its subcellular location is the plastid. The protein localises to the chloroplast. It carries out the reaction RNA(n) + a ribonucleoside 5'-triphosphate = RNA(n+1) + diphosphate. Its function is as follows. DNA-dependent RNA polymerase catalyzes the transcription of DNA into RNA using the four ribonucleoside triphosphates as substrates. The protein is DNA-directed RNA polymerase subunit beta'' of Guizotia abyssinica (Niger).